Consider the following 258-residue polypeptide: MLAIISPAKTLDYQSAVPKLAVTQPLLTDYSQQLIDVCRQLTPAEIGSLMSVSDKLAGLNAARFADWQKEHNEQNARAAIYAFRGDVYTGLDADSLTAEDIQFAQSHLRMLSGLYGLLRPLDLMQPYRLEMSTKLATAKGKDLYQFWGEIITESLQNALDEQGDDVLINLASDEYYKVVKPSKLQARIVKPVFLDHKNGKYKVISFYAKKARGLMSRYLITQRINRIEQLKHFNLGGYQFDDSVSTEREWVFKRDISE.

It belongs to the UPF0246 family.

The sequence is that of UPF0246 protein Asuc_0575 from Actinobacillus succinogenes (strain ATCC 55618 / DSM 22257 / CCUG 43843 / 130Z).